A 534-amino-acid polypeptide reads, in one-letter code: NAD(P)H-quinone oxidoreductase chain 4 (534 aa).

The next 14 helical transmembrane spans lie at 12 to 32 (FPWLSASILFPIGSAFVIPFF), 44 to 64 (FALSIALITFLITVGSYINGF), 96 to 116 (MPLILLTSFITALAVLAAWPV), 120 to 140 (PKLFFFLILVMDGGQIAVFAV), 144 to 164 (LLFFLTWELELIPVYLLLAIW), 176 to 196 (FIIYTAGSSIFILLAALAMGF), 220 to 240 (ILCYVGLLIAFGVKLPIVPLH), 251 to 271 (TAPVHMLLAGILLKMGGYALL), 285 to 305 (FAPLLIVLGVVNIIYAALTSF), 314 to 334 (IAYSSISHMGFVLIGIGSFSS), 340 to 360 (AMLQMVSHGLIGASLFFLVGA), 384 to 404 (FALWTACSLASLALPGMSGFV), 425 to 445 (VVMASLAAIGVILTPIYLLSM), and 472 to 492 (VYIIACLLLPIIGIGLYPRLV).

It belongs to the complex I subunit 4 family.

It is found in the cellular thylakoid membrane. It catalyses the reaction a plastoquinone + NADH + (n+1) H(+)(in) = a plastoquinol + NAD(+) + n H(+)(out). The enzyme catalyses a plastoquinone + NADPH + (n+1) H(+)(in) = a plastoquinol + NADP(+) + n H(+)(out). Its function is as follows. NDH-1 shuttles electrons from NAD(P)H, via FMN and iron-sulfur (Fe-S) centers, to quinones in the respiratory chain. The immediate electron acceptor for the enzyme in this species is believed to be plastoquinone. Couples the redox reaction to proton translocation (for every two electrons transferred, four hydrogen ions are translocated across the cytoplasmic membrane), and thus conserves the redox energy in a proton gradient. The polypeptide is NAD(P)H-quinone oxidoreductase chain 4 (Prochlorococcus marinus (strain AS9601)).